The primary structure comprises 484 residues: Bifunctional protein HldE (484 aa).

The ribokinase stretch occupies residues 1-320 (MDFSSITVLC…AELNAQDADA (320 aa)). An ATP-binding site is contributed by 195–198 (NARE). D265 is an active-site residue. Residues 349–484 (FTNGCFDIIH…RIRAAGAADR (136 aa)) are cytidylyltransferase.

In the N-terminal section; belongs to the carbohydrate kinase PfkB family. It in the C-terminal section; belongs to the cytidylyltransferase family. As to quaternary structure, homodimer.

It carries out the reaction D-glycero-beta-D-manno-heptose 7-phosphate + ATP = D-glycero-beta-D-manno-heptose 1,7-bisphosphate + ADP + H(+). It catalyses the reaction D-glycero-beta-D-manno-heptose 1-phosphate + ATP + H(+) = ADP-D-glycero-beta-D-manno-heptose + diphosphate. It functions in the pathway nucleotide-sugar biosynthesis; ADP-L-glycero-beta-D-manno-heptose biosynthesis; ADP-L-glycero-beta-D-manno-heptose from D-glycero-beta-D-manno-heptose 7-phosphate: step 1/4. The protein operates within nucleotide-sugar biosynthesis; ADP-L-glycero-beta-D-manno-heptose biosynthesis; ADP-L-glycero-beta-D-manno-heptose from D-glycero-beta-D-manno-heptose 7-phosphate: step 3/4. In terms of biological role, catalyzes the phosphorylation of D-glycero-D-manno-heptose 7-phosphate at the C-1 position to selectively form D-glycero-beta-D-manno-heptose-1,7-bisphosphate. Catalyzes the ADP transfer from ATP to D-glycero-beta-D-manno-heptose 1-phosphate, yielding ADP-D-glycero-beta-D-manno-heptose. This is Bifunctional protein HldE from Gluconacetobacter diazotrophicus (strain ATCC 49037 / DSM 5601 / CCUG 37298 / CIP 103539 / LMG 7603 / PAl5).